The following is a 4857-amino-acid chain: Dual E2 ubiquitin-conjugating enzyme/E3 ubiquitin-protein ligase BIRC6 (4857 aa).

WD repeat units follow at residues 68-106 (DGLH…QASA) and 107-136 (LSAK…AVGC). Residues 268-377 (PELGVGPGRS…LSVTLATSPA (110 aa)) form a BIR repeat. Zn(2+)-binding residues include Cys-328, Cys-331, His-348, and Cys-355. Residues 379 to 426 (FPCTDGTDRISCFGSGSCPHFLAAATKRGKICIWDVSKLMKVHLKFEI) form a WD 3 repeat. 2 disordered regions span residues 465–498 (DIPK…TSQK) and 579–618 (ATSP…NSEL). Over residues 472 to 482 (DSDDLLEDSDS) the composition is skewed to acidic residues. 5 positions are modified to phosphoserine: Ser-473, Ser-480, Ser-482, Ser-581, and Ser-590. WD repeat units lie at residues 501–720 (MEVS…VQCL), 730–850 (NLCI…QHIK), 851–927 (DPQD…AKVE), and 928–966 (PPKK…FLQI). A compositionally biased stretch (polar residues) spans 579-588 (ATSPISSNSH). The span at 595–618 (SRTQGESISEQGSTDNESCTNSEL) shows a compositional bias: polar residues. Disordered stretches follow at residues 984–1004 (LSKG…PSSP) and 1053–1073 (QQQR…AAQH). Residues 992-1004 (SEGSKPLSNPSSP) are compositionally biased toward polar residues. Residues 1056–1065 (RRHPQHLHQQ) are compositionally biased toward basic residues. Thr-1710 carries the phosphothreonine modification. A phosphoserine mark is found at Ser-2222 and Ser-2955. The tract at residues 2945-2973 (SVTTNTTDSVSDEEKVSGGKDGNGSSTSV) is disordered. Residues 3189-3193 (HRRAR) are HRRAR loop; important for DIABLO/SMAC and HTRA2 binding. Residues 3819–4068 (DEKVTMFLQS…ESLLETCPIQ (250 aa)) form the Ubiquitin-like domain. The interval 3923–3949 (QSKRAVSATPPRPPSRRGRTIPDKIGS) is disordered. Thr-3931 is modified (phosphothreonine). Ser-4023 carries the phosphoserine modification. Residues 4260 to 4283 (RVPNSSVNQTEPQVSSSHNPTSTE) form a disordered region. Residues 4261-4283 (VPNSSVNQTEPQVSSSHNPTSTE) show a composition bias toward polar residues. A UBC core domain is found at 4573-4740 (ARARRLAQEA…IRQATVKWAM (168 aa)). Cys-4666 acts as the Glycyl thioester intermediate in catalysis. The segment at 4835 to 4857 (EETLMHDQVKPSSSKELPSDFQL) is disordered. Residues 4844 to 4857 (KPSSSKELPSDFQL) are compositionally biased toward polar residues.

Belongs to the BIRC6 family. As to quaternary structure, homodimer; antiparallel. Interacts with RNF41. Interacts with DIABLO/SMAC, likely with higher affinity to SMAC dimer than SMAC monomer; this interaction blocks the substrate-binding site and inhibits the caspase inhibition activity of BIRC6. Interacts with KIF23/MKLP1, USP8/UBPY, BIRC5/survivin, MAP2K1/MEK1, RAB8A/RAB8, RAB11A/RAB11, PLK1, EXOC3/SEC6 and EXOC4/SEC8. Ubiquitinated; mediated by RNF41 E3 ligase and leads to proteasomal degradation, impairing inhibition of apoptosis. Deubiquitinated by USP8/UBPY. Autoubiquitinated; mediated by E1 ubiquitin activating enzyme UBA6. Post-translationally, proteolytically cleaved. Acts as substrate for CASP3, CASP6, CASP7, CASP9 and HTRA2. As to expression, expressed in brain cancer cells.

The protein resides in the golgi apparatus. Its subcellular location is the trans-Golgi network membrane. The protein localises to the endosome. It localises to the cytoplasm. It is found in the cytoskeleton. The protein resides in the spindle pole. Its subcellular location is the microtubule organizing center. The protein localises to the centrosome. It localises to the midbody. It is found in the midbody ring. The catalysed reaction is S-ubiquitinyl-[E1 ubiquitin-activating enzyme]-L-cysteine + [acceptor protein]-L-lysine = [E1 ubiquitin-activating enzyme]-L-cysteine + N(6)-monoubiquitinyl-[acceptor protein]-L-lysine.. With respect to regulation, inhibited by DIABLO/SMAC, which competes for the substrate-binding sites on BIRC6. BIRC6 inhibits caspases and protease by ubiquitination but BIRC6 itself is subjected to protease cleavage by CASP3, CASP6, CASP7, CASP9 and HTRA2 by protease cleavage. Anti-apoptotic protein known as inhibitor of apoptosis (IAP) which can regulate cell death by controlling caspases and by acting as an E3 ubiquitin-protein ligase. Unlike most IAPs, does not contain a RING domain and it is not a RING-type E3 ligase. Instead acts as a dual E2/E3 enzyme that combines ubiquitin conjugating (E2) and ubiquitin ligase (E3) activities in a single polypeptide. Ubiquitination is mediated by a non-canonical E1 ubiquitin activating enzyme UBA6. Ubiquitinates CASP3, CASP7 and CASP9 and inhibits their caspase activity; also ubiquitinates their procaspases but to a weaker extent. Ubiquitinates pro-apoptotic factors DIABLO/SMAC and HTRA2. DIABLO/SMAC antagonizes the caspase inhibition activity of BIRC6 by competing for the same binding sites as the caspases. Ubiquitinates the autophagy protein MAP1LC3B; this activity is also inhibited by DIABLO/SMAC. Important regulator for the final stages of cytokinesis. Crucial for normal vesicle targeting to the site of abscission, but also for the integrity of the midbody and the midbody ring, and its striking ubiquitin modification. This is Dual E2 ubiquitin-conjugating enzyme/E3 ubiquitin-protein ligase BIRC6 (BIRC6) from Homo sapiens (Human).